The sequence spans 1954 residues: Protein GREB1 (1954 aa).

3 disordered regions span residues 48 to 83, 238 to 342, and 1083 to 1235; these read LSSL…QLPP, LAAF…AKHE, and KGPK…GSSS. Over residues 59–68 the composition is skewed to acidic residues; sequence NEEEEEDGEG. Residues 292–303 show a composition bias toward low complexity; the sequence is SSLSALPRPSAL. 2 stretches are compositionally biased toward basic and acidic residues: residues 1083–1099 and 1122–1133; these read KGPK…KLSS and GPVKRERSHSHD. Residues 1134 to 1146 show a composition bias toward low complexity; it reads SASSSLSSRASGS. Polar residues predominate over residues 1187–1196; that stretch reads RVSQGSTVIS. The span at 1224–1235 shows a compositional bias: low complexity; the sequence is SSQLSSSSGSSS. Residues 1873-1893 traverse the membrane as a helical segment; the sequence is DMVFSGLLLYLCDSFVGASFL.

The protein belongs to the GREB1 family.

The protein resides in the membrane. Functionally, may play a role in estrogen-stimulated cell proliferation. This chain is Protein GREB1 (Greb1), found in Mus musculus (Mouse).